Here is a 325-residue protein sequence, read N- to C-terminus: DNA-directed RNA polymerase subunit alpha (325 aa).

The segment at 1–238 (MSLKSLLKGF…EHLTVFINFE (238 aa)) is alpha N-terminal domain (alpha-NTD). Residues 255-325 (LKASLSKHVE…LGLSFGMRDF (71 aa)) form an alpha C-terminal domain (alpha-CTD) region.

It belongs to the RNA polymerase alpha chain family. As to quaternary structure, homodimer. The RNAP catalytic core consists of 2 alpha, 1 beta, 1 beta' and 1 omega subunit. When a sigma factor is associated with the core the holoenzyme is formed, which can initiate transcription.

The catalysed reaction is RNA(n) + a ribonucleoside 5'-triphosphate = RNA(n+1) + diphosphate. Its function is as follows. DNA-dependent RNA polymerase catalyzes the transcription of DNA into RNA using the four ribonucleoside triphosphates as substrates. This chain is DNA-directed RNA polymerase subunit alpha, found in Leptospira interrogans serogroup Icterohaemorrhagiae serovar copenhageni (strain Fiocruz L1-130).